The primary structure comprises 90 residues: Evasin P458 (90 aa).

Positions Met-1 to Ala-24 are cleaved as a signal peptide. Intrachain disulfides connect Cys-44–Cys-63, Cys-48–Cys-65, and Cys-59–Cys-76. Asn-47 carries N-linked (GlcNAc...) asparagine glycosylation.

Its subcellular location is the secreted. Its function is as follows. Salivary chemokine-binding protein which binds to host chemokines CXCL1, CXCL2, CXCL3, CXCL5, CXCL6 and CXCL13. The sequence is that of Evasin P458 from Ixodes ricinus (Common tick).